Consider the following 199-residue polypeptide: 3-hexulose-6-phosphate isomerase (199 aa).

Residues 44–186 (LARQIVQPGR…FQSLWDHTEV (143 aa)) form the SIS domain. Residues Ser62 and 101–106 (SGSGTT) contribute to the substrate site. The Proton acceptor role is filled by Glu166.

The protein belongs to the SIS family. PHI subfamily.

It carries out the reaction D-arabino-hex-3-ulose 6-phosphate = beta-D-fructose 6-phosphate. It functions in the pathway one-carbon metabolism; formaldehyde assimilation via RuMP pathway; D-fructose 6-phosphate from D-ribulose 5-phosphate and formaldehyde: step 2/2. Catalyzes the isomerization between 3-hexulose 6-phosphate and fructose 6-phosphate. The protein is 3-hexulose-6-phosphate isomerase (rmpB) of Mycobacterium gastri.